Here is a 499-residue protein sequence, read N- to C-terminus: Membrane-associated tyrosine- and threonine-specific cdc2-inhibitory kinase (499 aa).

The residue at position 1 (M1) is an N-acetylmethionine. The segment at 1-29 is disordered; sequence MLERPPALAMPMPTEGTPPPLSGTPIPVP. Residues 16–28 are compositionally biased toward pro residues; that stretch reads GTPPPLSGTPIPV. A Phosphothreonine modification is found at T17. S40 carries the phosphoserine modification. A disordered region spans residues 42–72; that stretch reads KRPRGLSRSLPPPPPAKGSIPISRLFPPRTP. Phosphoserine is present on residues S94 and S120. A Protein kinase domain is found at 110–359; it reads FQRLSRLGHG…AEALLALPVL (250 aa). ATP contacts are provided by residues 116 to 124 and K139; that span reads LGHGSYGEV. Phosphoserine occurs at positions 143 and 160. Catalysis depends on D233, which acts as the Proton acceptor. 3 residues coordinate Mg(2+): N238, D251, and G253. Residues 382 to 398 carry the Membrane-association motif motif; the sequence is LWQALLALLCWLWHGLA. Residues 398–499 are interaction with PIN1; sequence AHPASWLQPL…SLFEDTLDPT (102 aa). S426 bears the Phosphoserine; by PLK1 mark. An interaction with CDC2-CCNB1 region spans residues 437 to 499; sequence GPSLSPEAVL…SLFEDTLDPT (63 aa). The disordered stretch occupies residues 451 to 485; that stretch reads GSTSTPRSRCTPRDALDLSDINSEPPRGSFPSFEP. Residues S469, S473, and S482 each carry the phosphoserine modification. Residue T495 is modified to Phosphothreonine; by PLK1.

This sequence belongs to the protein kinase superfamily. Ser/Thr protein kinase family. WEE1 subfamily. Interacts with CDC2-CCNB1 complex. Can also interact with PIN1 when phosphorylated by CDC2-CCNB1. In terms of processing, autophosphorylated. Phosphorylated by CDC2-CCNB1 complexes on undefined serine and threonine residues. The phosphorylation by CDC2-CCNB1 complexes may inhibit the catalytic activity.

Its subcellular location is the endoplasmic reticulum membrane. The protein resides in the golgi apparatus membrane. It carries out the reaction L-seryl-[protein] + ATP = O-phospho-L-seryl-[protein] + ADP + H(+). The enzyme catalyses L-threonyl-[protein] + ATP = O-phospho-L-threonyl-[protein] + ADP + H(+). With respect to regulation, negatively regulated by hyperphosphorylation during mitosis. The hyperphosphorylated form does not associate with CCNB1-CDC2 complexes. The PLK1 protein kinase may be required for mitotic phosphorylation. Its function is as follows. Acts as a negative regulator of entry into mitosis (G2 to M transition) by phosphorylation of the CDK1 kinase specifically when CDK1 is complexed to cyclins. Mediates phosphorylation of CDK1 predominantly on 'Thr-14'. Also involved in Golgi fragmentation. May be involved in phosphorylation of CDK1 on 'Tyr-15' to a lesser degree, however tyrosine kinase activity is unclear and may be indirect. The chain is Membrane-associated tyrosine- and threonine-specific cdc2-inhibitory kinase (PKMYT1) from Homo sapiens (Human).